We begin with the raw amino-acid sequence, 481 residues long: G-protein coupled receptor 37-like 1 (481 aa).

A signal peptide spans 1-25 (MRWLWPLAVSLAVILAVGLSRVSGG). Disordered stretches follow at residues 26–58 (APLHLGRHRAETQEQQSRSKRGTEDEEAKGVQQ) and 70–108 (PIHPAGLQPTKPLVATSPNPGKDGGTPDSGQELRGNLTG). Topologically, residues 26-134 (APLHLGRHRA…ESSYSAYAIM (109 aa)) are extracellular. Residues Thr79 and Thr85 are each glycosylated (O-linked (GalNAc...) threonine). Residue Ser86 is glycosylated (O-linked (GalNAc...) serine). O-linked (GalNAc...) threonine glycosylation occurs at Thr95. Residue Asn105 is glycosylated (N-linked (GlcNAc...) asparagine). O-linked (GalNAc...) threonine glycosylation occurs at Thr107. A helical transmembrane segment spans residues 135–155 (LLALVVFAVGIVGNLSVMCIV). Topologically, residues 156-167 (WHSYYLKSAWNS) are cytoplasmic. A helical transmembrane segment spans residues 168–188 (ILASLALWDFLVLFFCLPIVI). Over 189–205 (FNEITKQRLLGDVSCRA) the chain is Extracellular. A disulfide bridge links Cys203 with Cys286. A helical membrane pass occupies residues 206 to 226 (VPFMEVSSLGVTTFSLCALGI). The Cytoplasmic segment spans residues 227-251 (DRFHVATSTLPKVRPIERCQSILAK). Residues 252-272 (LAVIWVGSMTLAVPELLLWQL) traverse the membrane as a helical segment. At 273–310 (AQEPAPTMGTLDSCIMKPSASLPESLYSLVMTYQNARM) the chain is on the extracellular side. A helical membrane pass occupies residues 311–331 (WWYFGCYFCLPILFTVTCQLV). Over 332–361 (TWRVRGPPGRKSECRASKHEQCESQLNSTV) the chain is Cytoplasmic. A helical membrane pass occupies residues 362-382 (VGLTVVYAFCTLPENVCNIVV). The Extracellular portion of the chain corresponds to 383–398 (AYLSTELTRQTLDLLG). Residues 399-419 (LINQFSTFFKGAITPVLLLCI) form a helical membrane-spanning segment. Residues 420-481 (CRPLGQAFLD…PPLLPLGTPC (62 aa)) lie on the Cytoplasmic side of the membrane. Ser471 carries the post-translational modification Phosphoserine. Thr479 is subject to Phosphothreonine.

Belongs to the G-protein coupled receptor 1 family. In terms of assembly, interacts with the PTCH1 receptor. O-glycosylated. In terms of processing, undergoes metalloprotease-mediated cleavage which reduces its constitutive activity. Post-translationally, ubiquitinated. As to expression, expressed in primary cortical astrocytes (at protein level). Expressed in the central nervous system.

The protein resides in the cell membrane. It localises to the cell projection. Its subcellular location is the cilium membrane. In terms of biological role, G-protein coupled receptor. Has been shown to bind the neuroprotective and glioprotective factor prosaposin (PSAP), leading to endocytosis followed by an ERK phosphorylation cascade. However, other studies have shown that prosaposin does not increase activity. It has been suggested that GPR37L1 is a constitutively active receptor which signals through the guanine nucleotide-binding protein G(s) subunit alpha. Participates in the regulation of postnatal cerebellar development by modulating the Shh pathway. Regulates baseline blood pressure in females and protects against cardiovascular stress in males. Mediates inhibition of astrocyte glutamate transporters and reduction in neuronal N-methyl-D-aspartate receptor activity. The chain is G-protein coupled receptor 37-like 1 (GPR37L1) from Homo sapiens (Human).